Here is a 480-residue protein sequence, read N- to C-terminus: Aspartyl/glutamyl-tRNA(Asn/Gln) amidotransferase subunit B (480 aa).

This sequence belongs to the GatB/GatE family. GatB subfamily. Heterotrimer of A, B and C subunits.

The enzyme catalyses L-glutamyl-tRNA(Gln) + L-glutamine + ATP + H2O = L-glutaminyl-tRNA(Gln) + L-glutamate + ADP + phosphate + H(+). The catalysed reaction is L-aspartyl-tRNA(Asn) + L-glutamine + ATP + H2O = L-asparaginyl-tRNA(Asn) + L-glutamate + ADP + phosphate + 2 H(+). Its function is as follows. Allows the formation of correctly charged Asn-tRNA(Asn) or Gln-tRNA(Gln) through the transamidation of misacylated Asp-tRNA(Asn) or Glu-tRNA(Gln) in organisms which lack either or both of asparaginyl-tRNA or glutaminyl-tRNA synthetases. The reaction takes place in the presence of glutamine and ATP through an activated phospho-Asp-tRNA(Asn) or phospho-Glu-tRNA(Gln). The sequence is that of Aspartyl/glutamyl-tRNA(Asn/Gln) amidotransferase subunit B from Streptococcus thermophilus (strain ATCC BAA-491 / LMD-9).